Consider the following 186-residue polypeptide: DNA damage up-regulated protein (186 aa).

The interval 147-166 (ATENGEGCRPARDPASSPSS) is disordered.

As to quaternary structure, interacts with DNA damage response proteins ATR, H2AX, PCNA, RAD18 and RAD51C. Forms a complex with H2AX and RAD18 following DDUP phosphorylation. Post-translationally, phosphorylated in an ATR-dependent manner; phosphorylation is required for interaction with H2AX and RAD18 and for DDUP-mediated DNA damage repair.

It localises to the nucleus. Its subcellular location is the chromosome. In terms of biological role, promotes DNA damage repair through both homologous recombination repair (HRR) and post-replication repair (PRR) mechanisms. Enhances the retention of DNA damage response protein RAD18 at sites of DNA damage. This allows for HRR via association of RAD18 with RAD51C and for PRR via RAD18-mediated promotion of PCNA monoubiquitination. The polypeptide is DNA damage up-regulated protein (Homo sapiens (Human)).